A 450-amino-acid polypeptide reads, in one-letter code: 3-phosphoshikimate 1-carboxyvinyltransferase (450 aa).

Positions 1–25 (MSAHGDPKPMTARKGGALTGTAEVP) are disordered. 3-phosphoshikimate is bound by residues Lys-28, Ser-29, and Arg-33. Residue Lys-28 participates in phosphoenolpyruvate binding. Residues Gly-101 and Arg-129 each contribute to the phosphoenolpyruvate site. Positions 174, 176, 327, and 354 each coordinate 3-phosphoshikimate. Gln-176 provides a ligand contact to phosphoenolpyruvate. The Proton acceptor role is filled by Asp-327. Phosphoenolpyruvate-binding residues include Arg-358 and Arg-403.

Belongs to the EPSP synthase family. In terms of assembly, monomer.

The protein localises to the cytoplasm. The enzyme catalyses 3-phosphoshikimate + phosphoenolpyruvate = 5-O-(1-carboxyvinyl)-3-phosphoshikimate + phosphate. It functions in the pathway metabolic intermediate biosynthesis; chorismate biosynthesis; chorismate from D-erythrose 4-phosphate and phosphoenolpyruvate: step 6/7. Its function is as follows. Catalyzes the transfer of the enolpyruvyl moiety of phosphoenolpyruvate (PEP) to the 5-hydroxyl of shikimate-3-phosphate (S3P) to produce enolpyruvyl shikimate-3-phosphate and inorganic phosphate. The chain is 3-phosphoshikimate 1-carboxyvinyltransferase from Jannaschia sp. (strain CCS1).